A 454-amino-acid chain; its full sequence is NEDD8-activating enzyme E1 catalytic subunit (454 aa).

A2 bears the N-acetylalanine mark. Residue 56 to 80 coordinates ATP; sequence GLGCELLKDLALSGFRNLEVIDMDR. C215 serves as the catalytic Glycyl thioester intermediate.

The protein belongs to the ubiquitin-activating E1 family. UBA3 subfamily. As to quaternary structure, heterodimer of UBA3/ECR1 and AXR1. Interacts with NEDD8 and RCE1. In terms of tissue distribution, expressed in shoot, root and floral meristems, in vascular tissues of cotyledons and mature leaves, and in the stele of the root.

The protein resides in the nucleus. It carries out the reaction ATP + [NEDD8 protein] + [E1 NEDD8-activating enzyme]-L-cysteine = AMP + diphosphate + [E1 NEDD8-activating enzyme]-S-[NEDD8 protein]-yl-L-cysteine.. It participates in protein modification; protein neddylation. Its function is as follows. Catalytic subunit of the dimeric ECR1-AXR1 E1 enzyme. E1 activates NEDD8/RUB1 by first adenylating its C-terminal glycine residue with ATP, thereafter linking this residue to the side chain of the catalytic cysteine, yielding a NEDD8-ECR1 thioester and free AMP. E1 finally transfers NEDD8 to the catalytic cysteine of RCE1. This Arabidopsis thaliana (Mouse-ear cress) protein is NEDD8-activating enzyme E1 catalytic subunit (ECR1).